The chain runs to 212 residues: Thymidylate kinase (212 aa).

11–18 (GPEGAGKT) contributes to the ATP binding site.

Belongs to the thymidylate kinase family.

The enzyme catalyses dTMP + ATP = dTDP + ADP. Phosphorylation of dTMP to form dTDP in both de novo and salvage pathways of dTTP synthesis. The polypeptide is Thymidylate kinase (Streptococcus pneumoniae (strain P1031)).